The sequence spans 341 residues: Anthranilate phosphoribosyltransferase (341 aa).

5-phospho-alpha-D-ribose 1-diphosphate-binding positions include glycine 84, 87–88, threonine 92, 94–97, 112–120, and serine 124; these read GD, NIST, and KHGNRSVSS. Glycine 84 is a binding site for anthranilate. Residue serine 96 participates in Mg(2+) binding. Anthranilate is bound at residue asparagine 115. An anthranilate-binding site is contributed by arginine 170. 2 residues coordinate Mg(2+): aspartate 229 and glutamate 230.

Belongs to the anthranilate phosphoribosyltransferase family. In terms of assembly, homodimer. It depends on Mg(2+) as a cofactor.

The catalysed reaction is N-(5-phospho-beta-D-ribosyl)anthranilate + diphosphate = 5-phospho-alpha-D-ribose 1-diphosphate + anthranilate. It participates in amino-acid biosynthesis; L-tryptophan biosynthesis; L-tryptophan from chorismate: step 2/5. Functionally, catalyzes the transfer of the phosphoribosyl group of 5-phosphorylribose-1-pyrophosphate (PRPP) to anthranilate to yield N-(5'-phosphoribosyl)-anthranilate (PRA). This Polynucleobacter asymbioticus (strain DSM 18221 / CIP 109841 / QLW-P1DMWA-1) (Polynucleobacter necessarius subsp. asymbioticus) protein is Anthranilate phosphoribosyltransferase.